Consider the following 137-residue polypeptide: Universal stress protein HP_0031 (137 aa).

The protein belongs to the universal stress protein A family.

This chain is Universal stress protein HP_0031, found in Helicobacter pylori (strain ATCC 700392 / 26695) (Campylobacter pylori).